A 318-amino-acid polypeptide reads, in one-letter code: Porphobilinogen deaminase (318 aa).

C241 is modified (S-(dipyrrolylmethanemethyl)cysteine).

Belongs to the HMBS family. Monomer. It depends on dipyrromethane as a cofactor.

It catalyses the reaction 4 porphobilinogen + H2O = hydroxymethylbilane + 4 NH4(+). It functions in the pathway porphyrin-containing compound metabolism; protoporphyrin-IX biosynthesis; coproporphyrinogen-III from 5-aminolevulinate: step 2/4. Its function is as follows. Tetrapolymerization of the monopyrrole PBG into the hydroxymethylbilane pre-uroporphyrinogen in several discrete steps. The polypeptide is Porphobilinogen deaminase (Geotalea uraniireducens (strain Rf4) (Geobacter uraniireducens)).